We begin with the raw amino-acid sequence, 417 residues long: Pre-mRNA-splicing factor RBM22 (417 aa).

Residues 159-186 form a C3H1-type zinc finger; sequence RNRPHICSFWVKGECKRGEECPYRHEKP. Positions 232–305 constitute an RRM domain; it reads TTLYVGGLGD…RRLNVKWGRS (74 aa). Disordered regions lie at residues 303 to 348 and 369 to 417; these read GRSQ…SANY and GLSG…PSSG. Basic and acidic residues predominate over residues 309 to 318; it reads RGKEREHDGS. Residues 369–391 are compositionally biased toward pro residues; it reads GLSGPPPGFGPHMFPPMAPPPFL.

The protein belongs to the SLT11 family. In terms of assembly, component of the pre-catalytic and catalytic spliceosome complexes. Component of the postcatalytic spliceosome P complex.

It is found in the nucleus. The protein localises to the cytoplasm. Required for pre-mRNA splicing as component of the activated spliceosome. Involved in the first step of pre-mRNA splicing. Binds directly to the internal stem-loop (ISL) domain of the U6 snRNA and to the pre-mRNA intron near the 5' splice site during the activation and catalytic phases of the spliceosome cycle. The polypeptide is Pre-mRNA-splicing factor RBM22 (rbm22) (Xenopus laevis (African clawed frog)).